The sequence spans 227 residues: 2,3-bisphosphoglycerate-dependent phosphoglycerate mutase (227 aa).

Substrate is bound by residues 7–14 (RHGFSEWN), 20–21 (TG), Arg59, 86–89 (ERHY), Lys97, 113–114 (RR), and 182–183 (GN). Catalysis depends on His8, which acts as the Tele-phosphohistidine intermediate. The Proton donor/acceptor role is filled by Glu86.

The protein belongs to the phosphoglycerate mutase family. BPG-dependent PGAM subfamily. As to quaternary structure, homodimer.

It carries out the reaction (2R)-2-phosphoglycerate = (2R)-3-phosphoglycerate. It participates in carbohydrate degradation; glycolysis; pyruvate from D-glyceraldehyde 3-phosphate: step 3/5. Catalyzes the interconversion of 2-phosphoglycerate and 3-phosphoglycerate. In Haemophilus ducreyi (strain 35000HP / ATCC 700724), this protein is 2,3-bisphosphoglycerate-dependent phosphoglycerate mutase.